A 189-amino-acid chain; its full sequence is Copper transport protein CTR2 (189 aa).

At 1-81 (MDDKKTWSTV…VVFEWWHIKT (81 aa)) the chain is on the cytoplasmic side. A helical transmembrane segment spans residues 82–102 (LPGLILSCLAIFGLAYLYEYL). The Vacuolar portion of the chain corresponds to 103–142 (KYCVHKRQLSQRVLLPNRSLTKINQADKVSNSILYGLQVG). Residues 143–163 (FSFMLMLVFMTYNGWLMLAVV) form a helical membrane-spanning segment. The Cytoplasmic portion of the chain corresponds to 164–189 (CGAIWGNYSWCTSYSPEIDDSSLACH).

Belongs to the copper transporter (Ctr) (TC 1.A.56) family. SLC31A subfamily. Homomultimer.

Its subcellular location is the vacuole membrane. Provides bioavailable copper via mobilization of vacuolar copper stores and export to the cytoplasm. This Saccharomyces cerevisiae (strain ATCC 204508 / S288c) (Baker's yeast) protein is Copper transport protein CTR2 (CTR2).